Reading from the N-terminus, the 142-residue chain is Two-component response regulator ARR22 (142 aa).

Residues 23 to 140 (NVLIVDDDPL…KIFPLISHLF (118 aa)) enclose the Response regulatory domain. 4-aspartylphosphate is present on D74.

Belongs to the ARR family. Type-A subfamily. Two-component system major event consists of a His-to-Asp phosphorelay between a sensor histidine kinase (HK) and a response regulator (RR). In plants, the His-to-Asp phosphorelay involves an additional intermediate named Histidine-containing phosphotransfer protein (HPt). This multistep phosphorelay consists of a His-Asp-His-Asp sequential transfer of a phosphate group between first a His and an Asp of the HK protein, followed by the transfer to a conserved His of the HPt protein and finally the transfer to an Asp in the receiver domain of the RR protein.

Its subcellular location is the nucleus. Functions as a response regulator involved in His-to-Asp phosphorelay signal transduction system. Phosphorylation of the Asp residue in the receiver domain activates the ability of the protein to promote the transcription of target genes. Type-A response regulators seem to act as negative regulators of the cytokinin signaling. This is Two-component response regulator ARR22 (ARR22) from Arabidopsis thaliana (Mouse-ear cress).